A 578-amino-acid chain; its full sequence is NADPH oxidase 4 (578 aa).

Residues 1-16 (MAVSWRSWLANEGVKH) lie on the Cytoplasmic side of the membrane. A helical membrane pass occupies residues 17–37 (LCLFIWLSMNVLLFWKTFLLY). Residues 38-62 (NQGPEYHYLHQMLGLGLCLSRASAS) are Extracellular-facing. In terms of domain architecture, Ferric oxidoreductase spans 58-303 (RASASVLNLN…YCAERLYRYI (246 aa)). A helical membrane pass occupies residues 63-83 (VLNLNCSLILLPMCRTLLAYL). Topologically, residues 84–103 (RGSQKVPSRRTRRLLDKSRT) are cytoplasmic. Residues 104 to 124 (FHITCGVTICIFSGVHVAAHL) traverse the membrane as a helical segment. Residues 125-154 (VNALNFSVNYSEDFVELNAARYRDEDPRKL) are Extracellular-facing. An N-linked (GlcNAc...) asparagine glycan is attached at Asn133. A helical membrane pass occupies residues 155–175 (LFTTVPGLTGVCMVVVLFLMI). Over 176-188 (TASTYAIRVSNYD) the chain is Cytoplasmic. Residues 189-209 (IFWYTHNLFFVFYMLLTLHVS) form a helical membrane-spanning segment. The Extracellular segment spans residues 210 to 424 (GGLLKYQTNL…SPFEESLNYE (215 aa)). Residues 218–273 (NLDTHPPGCISLNRTSSQNISLPEYFSEHFHEPFPEGFSKPAEFTQHKFVKICMEE) are E-loop; essential for H2O2 generating catalytic activity. Asn230 carries N-linked (GlcNAc...) asparagine glycosylation. The tract at residues 248 to 575 (HEPFPEGFSK…YGTRFEYNKE (328 aa)) is mediates interaction with TLR4. The region spanning 304-419 (RSNKPVTIIS…DGPFGSPFEE (116 aa)) is the FAD-binding FR-type domain. Residues 425-445 (VSLCVAGGIGVTPFASILNTL) traverse the membrane as a helical segment. Over 446–578 (LDDWKPYKLR…RFEYNKESFS (133 aa)) the chain is Cytoplasmic.

As to quaternary structure, interacts with protein disulfide isomerase. Interacts with, relocalizes and stabilizes CYBA/p22phox. Interacts with TLR4. Interacts with PPP1R15A. Interacts with LRRC8A; this interaction prevents the ubiquitin-mediated degradation of LRRC8A. Requires heme as cofactor. Deubiquitinated by USP19. In terms of processing, N-glycosylated and glycosylation is required for its proper function. Post-translationally, N-glycosylated. Expressed by distal tubular cells in kidney cortex and in endothelial cells (at protein level). Widely expressed. Strongly expressed in kidney and to a lower extent in heart, adipocytes, hepatoma, endothelial cells, skeletal muscle, brain, several brain tumor cell lines and airway epithelial cells.

It is found in the cytoplasm. The protein resides in the endoplasmic reticulum membrane. It localises to the cell membrane. Its subcellular location is the cell junction. The protein localises to the focal adhesion. It is found in the nucleus. The protein resides in the nucleolus. It localises to the perinuclear region. It carries out the reaction NADPH + 2 O2 = 2 superoxide + NADP(+) + H(+). It catalyses the reaction NADPH + O2 + H(+) = H2O2 + NADP(+). With respect to regulation, inhibited by plumbagin. Activated by phorbol 12-myristate 13-acetate (PMA). Activated by insulin. Inhibited by diphenylene iodonium. In terms of biological role, NADPH oxidase that catalyzes predominantly the reduction of oxygen to H2O2. Can also catalyze to a smaller extent, the reduction of oxygen to superoxide. May function as an oxygen sensor regulating the KCNK3/TASK-1 potassium channel and HIF1A activity. May regulate insulin signaling cascade. May play a role in apoptosis, bone resorption and lipolysaccharide-mediated activation of NFKB. May produce superoxide in the nucleus and play a role in regulating gene expression upon cell stimulation. Promotes ferroptosis, reactive oxygen species production and reduced glutathione (GSH) levels by activating NLRP3 inflammasome activation and cytokine release. Its function is as follows. NADPH oxidase that catalyzes the generation of superoxide from molecular oxygen utilizing NADPH as an electron donor. Involved in redox signaling in vascular cells. Modulates the nuclear activation of ERK1/2 and the ELK1 transcription factor, and is capable of inducing nuclear DNA damage. Lacks superoxide-generating NADPH oxidase activity. The polypeptide is NADPH oxidase 4 (NOX4) (Homo sapiens (Human)).